Consider the following 517-residue polypeptide: Crotonobetaine/carnitine--CoA ligase (517 aa).

The protein belongs to the ATP-dependent AMP-binding enzyme family.

It catalyses the reaction 4-(trimethylamino)butanoate + ATP + CoA = 4-(trimethylamino)butanoyl-CoA + AMP + diphosphate. The enzyme catalyses crotonobetaine + ATP + CoA = crotonobetainyl-CoA + AMP + diphosphate. The catalysed reaction is (R)-carnitine + ATP + CoA = (R)-carnitinyl-CoA + AMP + diphosphate. Its pathway is amine and polyamine metabolism; carnitine metabolism. Catalyzes the transfer of CoA to carnitine, generating the initial carnitinyl-CoA needed for the CaiB reaction cycle. Also has activity toward crotonobetaine and gamma-butyrobetaine. The polypeptide is Crotonobetaine/carnitine--CoA ligase (Shigella flexneri).